A 1323-amino-acid chain; its full sequence is PAS domain-containing serine/threonine-protein kinase (1323 aa).

Methionine 1 is subject to N-acetylmethionine. Serine 19 bears the Phosphoserine mark. The disordered stretch occupies residues 20–47 (LPLPVSAEGPAAQTTAEPSRSFSSAHRH). The segment covering 31–43 (AQTTAEPSRSFSS) has biased composition (polar residues). Threonine 34 carries the post-translational modification Phosphothreonine. 2 PAS domains span residues 119-190 (SSPL…MEAD) and 335-402 (YRAS…SLQL). A Phosphoserine modification is found at serine 582. A disordered region spans residues 837-857 (AASDRESPGHVPSTLDAGPED). Position 939 is a phosphoserine (serine 939). Residues 999 to 1251 (YSTMSPLGSG…LEKLVTDPWV (253 aa)) enclose the Protein kinase domain. ATP contacts are provided by residues 1005 to 1013 (LGSGAFGFV), lysine 1028, and 1082 to 1089 (EKHGSGLD). Aspartate 1128 acts as the Proton acceptor in catalysis. Aspartate 1146 is an ATP binding site. 2 positions are modified to phosphothreonine; by autocatalysis: threonine 1161 and threonine 1165. The tract at residues 1298–1323 (CGGPVPGEAPNGQGCLHPGDPRLLTS) is disordered.

The protein belongs to the protein kinase superfamily. CAMK Ser/Thr protein kinase family. In terms of processing, autophosphorylated on Thr-1161 and Thr-1165. Autophosphorylation is activated by phospholipids. In terms of tissue distribution, ubiquitously expressed, with slightly higher expression in brain, prostate and testis. Reduced expression was found in placenta. Present in germ cells of testis and in the midpiece of sperm tails (at protein level).

Its subcellular location is the cytoplasm. The protein resides in the nucleus. The catalysed reaction is L-seryl-[protein] + ATP = O-phospho-L-seryl-[protein] + ADP + H(+). The enzyme catalyses L-threonyl-[protein] + ATP = O-phospho-L-threonyl-[protein] + ADP + H(+). Protein kinase activity is inhibited by the first PAS domain: binding of an unidentified ligand desinhibits the protein kinase activity. May be activated by autophosphorylation on Thr-1161 and Thr-1165. The activating role of autophosphorylation at Thr-1161 is unclear: according to a report, autophosphorylation at Thr-1161 does not play a major role in activation. Autophosphorylation is enhanced upon phosphatidylinositol monophosphate (phosphatidylinositol 4-phosphate) binding and inhibited upon phosphatidylinositol bi- and tri-phosphate binding. In contrast, phosphorylation of target proteins is inhibited upon all phosphatidylinositol-binding (phosphatidylinositol mono- bi- and tri-phosphate). Functionally, serine/threonine-protein kinase involved in energy homeostasis and protein translation. Phosphorylates EEF1A1, GYS1, PDX1 and RPS6. Probably plays a role under changing environmental conditions (oxygen, glucose, nutrition), rather than under standard conditions. Acts as a sensor involved in energy homeostasis: regulates glycogen synthase synthesis by mediating phosphorylation of GYS1, leading to GYS1 inactivation. May be involved in glucose-stimulated insulin production in pancreas and regulation of glucagon secretion by glucose in alpha cells; however such data require additional evidences. May play a role in regulation of protein translation by phosphorylating EEF1A1, leading to increase translation efficiency. May also participate in respiratory regulation. The protein is PAS domain-containing serine/threonine-protein kinase (PASK) of Homo sapiens (Human).